The following is a 198-amino-acid chain: RNA-free ribonuclease P (198 aa).

It belongs to the HARP family.

The enzyme catalyses Endonucleolytic cleavage of RNA, removing 5'-extranucleotides from tRNA precursor.. In terms of biological role, RNA-free RNase P that catalyzes the removal of the 5'-leader sequence from pre-tRNA to produce the mature 5'-terminus. The chain is RNA-free ribonuclease P from Nitrosococcus oceani (strain ATCC 19707 / BCRC 17464 / JCM 30415 / NCIMB 11848 / C-107).